The primary structure comprises 1060 residues: Beta-galactosidase (1060 aa).

Substrate contacts are provided by Asn110 and Asp209. Na(+) is bound at residue Asp209. Mg(2+) is bound by residues Glu432, His434, and Glu477. Residues Glu477 and Glu553–His556 each bind substrate. Glu477 (proton donor) is an active-site residue. Glu553 serves as the catalytic Nucleophile. A Mg(2+)-binding site is contributed by Asn613. Residues Phe617 and Asn620 each coordinate Na(+). Residues Asn620 and Trp1035 each contribute to the substrate site.

The protein belongs to the glycosyl hydrolase 2 family. As to quaternary structure, homotetramer. It depends on Mg(2+) as a cofactor. The cofactor is Na(+).

It carries out the reaction Hydrolysis of terminal non-reducing beta-D-galactose residues in beta-D-galactosides.. The sequence is that of Beta-galactosidase from Yersinia pestis bv. Antiqua (strain Antiqua).